We begin with the raw amino-acid sequence, 261 residues long: Hydroxyethylthiazole kinase (261 aa).

M45 contributes to the substrate binding site. ATP is bound by residues R121 and S167. A substrate-binding site is contributed by G194.

This sequence belongs to the Thz kinase family. Mg(2+) is required as a cofactor.

It catalyses the reaction 5-(2-hydroxyethyl)-4-methylthiazole + ATP = 4-methyl-5-(2-phosphooxyethyl)-thiazole + ADP + H(+). The protein operates within cofactor biosynthesis; thiamine diphosphate biosynthesis; 4-methyl-5-(2-phosphoethyl)-thiazole from 5-(2-hydroxyethyl)-4-methylthiazole: step 1/1. Its function is as follows. Catalyzes the phosphorylation of the hydroxyl group of 4-methyl-5-beta-hydroxyethylthiazole (THZ). This is Hydroxyethylthiazole kinase from Vibrio atlanticus (strain LGP32) (Vibrio splendidus (strain Mel32)).